The chain runs to 685 residues: MNLNKNNNSVEDSVSSDLIDLECTFESMGLDNRILRALKKMGFQNPSLVQSKSIPLSLQGKDILAKARTGSGKTAAYSIPIIQKVLMAKEKSNIKGVKAVVLVPTRELCEQVKNHFNQVSYYCQQLVSVVQLGNDKTLDEQKGLLRDIPDVIVSTPTRLVQHLENKTIQLQSTLDILVIDEADLVLNYGHQNDINIIKSFLPKVCQCFLMSATLTKEVEELKKLVLHTPAVLKLEEDKAIQTNLSEYSIKCAEVDKFLLVFSLLRLRLMQGKILFFVNDTNNCYKLKLFFERFHIKCAVLNSELPINSRHDIILQFNKGLFDYLIATDESFKSDSNKKEEQELEDNENEDDDDDDDEMTDVKKEDDEENEDEEENDEENEEDEENEEDEEDEENEEDDDEEENEEDDDKKNKNKKINNSKGDKEYGVARGIDFRNVDIVVNFDFPRTIKNYIHRIGRTARGTNKGIALSFVTYHNEELLKKVSKTRGDAGYNLKPFEFKMNAIEGFRYRVEDVLRTIGIRAIKEAKKTELKQELLNNEKLKSHFSENPQDLLALKHDTTLIKKQVPLHLRVVPEYLLPTQFKNHADQKLEIIPSRPQSGHHGTTGRSLGVNKKLEQKKRKKDILKTLSIKKNTTLTGEELAQARSKSLIKRLKIKEGNISADGSYKTVKVQKKGANNNRRKLIVD.

The Q motif signature appears at 23–51 (CTFESMGLDNRILRALKKMGFQNPSLVQS). Residues 54–232 (IPLSLQGKDI…KLVLHTPAVL (179 aa)) enclose the Helicase ATP-binding domain. 67-74 (ARTGSGKT) serves as a coordination point for ATP. The short motif at 180-183 (DEAD) is the DEAD box element. 2 disordered regions span residues 332–423 (KSDS…KGDK) and 593–617 (PSRP…LEQK). 2 stretches are compositionally biased toward acidic residues: residues 341 to 358 (QELE…DDEM) and 365 to 407 (DDEE…EEDD). Residues 351–504 (DDDDDDEMTD…PFEFKMNAIE (154 aa)) enclose the Helicase C-terminal domain. Residues 595-606 (RPQSGHHGTTGR) are compositionally biased toward polar residues.

The protein belongs to the DEAD box helicase family. DDX56/DBP9 subfamily.

Its subcellular location is the nucleus. It is found in the nucleolus. The enzyme catalyses ATP + H2O = ADP + phosphate + H(+). In terms of biological role, may play a role in later stages of the processing of the pre-ribosomal particles leading to mature 60S ribosomal subunits. This is Probable ATP-dependent RNA helicase ddx56 (ddx56) from Dictyostelium discoideum (Social amoeba).